The sequence spans 22 residues: Mu-conotoxin TIIIA (22 aa).

3 disulfide bridges follow: cysteine 4–cysteine 16, cysteine 5–cysteine 21, and cysteine 11–cysteine 22. Residues proline 8 and proline 18 each carry the 4-hydroxyproline modification. Cysteine 22 is subject to Cysteine amide.

Belongs to the conotoxin M superfamily. In terms of tissue distribution, expressed by the venom duct.

It is found in the secreted. In terms of biological role, mu-conotoxins block voltage-gated sodium channels (Nav). This synthetic toxin reversibly and potently blocks rNav1.4/SCN4A (IC(50) is 9 nM) and rNav1.2/SCN2A (IC(50) is 40 nM). It also moderately blocks rNav1.1/SCN1A, rNav1.3/SCN3A, and rNav1.6/SCN8A. The block of SCN1A and SCN2A is modified when beta-subunits are coexpressed with alpha subunits. Hence, blocks of channels containing beta-1 and beta-3 subunits are more potent (compared to channels without beta subunits), whereas blocks of channels containing beta-2 and beta-4 subunits are less potent (compared to channels without beta subunits). The polypeptide is Mu-conotoxin TIIIA (Conus tulipa (Fish-hunting cone snail)).